The following is a 219-amino-acid chain: 2-C-methyl-D-erythritol 4-phosphate cytidylyltransferase (219 aa).

This sequence belongs to the IspD/TarI cytidylyltransferase family. IspD subfamily.

The enzyme catalyses 2-C-methyl-D-erythritol 4-phosphate + CTP + H(+) = 4-CDP-2-C-methyl-D-erythritol + diphosphate. It functions in the pathway isoprenoid biosynthesis; isopentenyl diphosphate biosynthesis via DXP pathway; isopentenyl diphosphate from 1-deoxy-D-xylulose 5-phosphate: step 2/6. Functionally, catalyzes the formation of 4-diphosphocytidyl-2-C-methyl-D-erythritol from CTP and 2-C-methyl-D-erythritol 4-phosphate (MEP). The protein is 2-C-methyl-D-erythritol 4-phosphate cytidylyltransferase of Chlamydia trachomatis serovar L2 (strain ATCC VR-902B / DSM 19102 / 434/Bu).